The following is a 583-amino-acid chain: cAMP-dependent protein kinase catalytic subunit 3 (583 aa).

2 disordered regions span residues 51–75 (ATPT…TIGK) and 98–264 (SGTA…QTAK). Polar residues-rich tracts occupy residues 52–69 (TPTQ…TGTP) and 98–107 (SGTAGSTSKL). A compositionally biased stretch (low complexity) spans 108–162 (TTGNGSGNTMTSAYKIPSNNSTTANDSSNTETTFTFKLGRSNGRSSSNVASSESS). Residues 163 to 176 (DPLESDYSEEDPEQ) are compositionally biased toward acidic residues. Residues 181-200 (PDPATNSRSSSTATTTTTSS) are compositionally biased toward low complexity. The segment covering 205–219 (NDVDEEDEEDDENEG) has biased composition (acidic residues). The segment covering 221–234 (GNGRDADDATHDSS) has biased composition (basic and acidic residues). Residues 235–256 (ESIEEDDGNETDDEEDDDESEE) show a composition bias toward acidic residues. A Protein kinase domain is found at 274 to 528 (YQIIKTVGTG…ADDVKRHRWF (255 aa)). ATP contacts are provided by residues 280 to 288 (VGTGTFGRV) and Lys-303. Asp-397 functions as the Proton acceptor in the catalytic mechanism. In terms of domain architecture, AGC-kinase C-terminal spans 529–583 (KHLNWNDVYSKKLKPPILPDVHHDGDTKNFDDYPEKDWKPAKAVDQRDLQYFNDF).

This sequence belongs to the protein kinase superfamily. AGC Ser/Thr protein kinase family. cAMP subfamily. In terms of tissue distribution, expressed in embryonic mesoderm, and the optic lamina, wing disk and leg disks of third instar larvae. More abundant in adult head than adult body.

The catalysed reaction is L-seryl-[protein] + ATP = O-phospho-L-seryl-[protein] + ADP + H(+). It carries out the reaction L-threonyl-[protein] + ATP = O-phospho-L-threonyl-[protein] + ADP + H(+). In terms of biological role, does not have an essential role in development. This Drosophila melanogaster (Fruit fly) protein is cAMP-dependent protein kinase catalytic subunit 3 (Pka-C3).